The following is a 334-amino-acid chain: Beta-ketoacyl-[acyl-carrier-protein] synthase III (334 aa).

Catalysis depends on residues Cys-114 and His-253. The ACP-binding stretch occupies residues 254 to 258; that stretch reads QANIR. Asn-283 is a catalytic residue.

This sequence belongs to the thiolase-like superfamily. FabH family. In terms of assembly, homodimer.

The protein localises to the cytoplasm. The catalysed reaction is malonyl-[ACP] + acetyl-CoA + H(+) = 3-oxobutanoyl-[ACP] + CO2 + CoA. It functions in the pathway lipid metabolism; fatty acid biosynthesis. Functionally, catalyzes the condensation reaction of fatty acid synthesis by the addition to an acyl acceptor of two carbons from malonyl-ACP. Catalyzes the first condensation reaction which initiates fatty acid synthesis and may therefore play a role in governing the total rate of fatty acid production. Possesses both acetoacetyl-ACP synthase and acetyl transacylase activities. Its substrate specificity determines the biosynthesis of branched-chain and/or straight-chain of fatty acids. The protein is Beta-ketoacyl-[acyl-carrier-protein] synthase III of Campylobacter concisus (strain 13826).